A 238-amino-acid polypeptide reads, in one-letter code: 7-cyano-7-deazaguanine synthase (238 aa).

14–24 (FSGGQDSATCL) contributes to the ATP binding site. 4 residues coordinate Zn(2+): Cys-202, Cys-217, Cys-220, and Cys-223.

This sequence belongs to the QueC family. Zn(2+) serves as cofactor.

It carries out the reaction 7-carboxy-7-deazaguanine + NH4(+) + ATP = 7-cyano-7-deazaguanine + ADP + phosphate + H2O + H(+). It participates in purine metabolism; 7-cyano-7-deazaguanine biosynthesis. Its function is as follows. Catalyzes the ATP-dependent conversion of 7-carboxy-7-deazaguanine (CDG) to 7-cyano-7-deazaguanine (preQ(0)). The sequence is that of 7-cyano-7-deazaguanine synthase from Nitrobacter hamburgensis (strain DSM 10229 / NCIMB 13809 / X14).